The sequence spans 81 residues: Sulfur carrier protein TusA (81 aa).

C19 serves as the catalytic Cysteine persulfide intermediate.

Belongs to the sulfur carrier protein TusA family. In terms of assembly, interacts with IscS.

It is found in the cytoplasm. The protein operates within tRNA modification. Its function is as follows. Sulfur carrier protein involved in sulfur trafficking in the cell. Part of a sulfur-relay system required for 2-thiolation during synthesis of 2-thiouridine of the modified wobble base 5-methylaminomethyl-2-thiouridine (mnm(5)s(2)U) in tRNA. Interacts with IscS and stimulates its cysteine desulfurase activity. Accepts an activated sulfur from IscS, which is then transferred to TusD, and thus determines the direction of sulfur flow from IscS to 2-thiouridine formation. Also appears to be involved in sulfur transfer for the biosynthesis of molybdopterin. The chain is Sulfur carrier protein TusA from Citrobacter koseri (strain ATCC BAA-895 / CDC 4225-83 / SGSC4696).